Consider the following 310-residue polypeptide: tRNA uridine(34) hydroxylase (310 aa).

Residues 134–232 (DDPDTLLIDT…YFEEVSQSES (99 aa)) enclose the Rhodanese domain. Cysteine 192 acts as the Cysteine persulfide intermediate in catalysis.

It belongs to the TrhO family.

It catalyses the reaction uridine(34) in tRNA + AH2 + O2 = 5-hydroxyuridine(34) in tRNA + A + H2O. In terms of biological role, catalyzes oxygen-dependent 5-hydroxyuridine (ho5U) modification at position 34 in tRNAs. The polypeptide is tRNA uridine(34) hydroxylase (Prochlorococcus marinus (strain MIT 9303)).